Here is a 354-residue protein sequence, read N- to C-terminus: Biotin synthase (354 aa).

The Radical SAM core domain maps to 64–282 (GDVELATLLS…IAVARITMPR (219 aa)). The [4Fe-4S] cluster site is built by Cys-79, Cys-83, and Cys-86. Cys-123, Cys-154, Cys-214, and Arg-286 together coordinate [2Fe-2S] cluster.

Belongs to the radical SAM superfamily. Biotin synthase family. As to quaternary structure, homodimer. The cofactor is [4Fe-4S] cluster. Requires [2Fe-2S] cluster as cofactor.

It catalyses the reaction (4R,5S)-dethiobiotin + (sulfur carrier)-SH + 2 reduced [2Fe-2S]-[ferredoxin] + 2 S-adenosyl-L-methionine = (sulfur carrier)-H + biotin + 2 5'-deoxyadenosine + 2 L-methionine + 2 oxidized [2Fe-2S]-[ferredoxin]. It participates in cofactor biosynthesis; biotin biosynthesis; biotin from 7,8-diaminononanoate: step 2/2. Its function is as follows. Catalyzes the conversion of dethiobiotin (DTB) to biotin by the insertion of a sulfur atom into dethiobiotin via a radical-based mechanism. The protein is Biotin synthase of Paracidovorax citrulli (strain AAC00-1) (Acidovorax citrulli).